Reading from the N-terminus, the 601-residue chain is Aspartate--tRNA(Asp/Asn) ligase (601 aa).

Glu173 serves as a coordination point for L-aspartate. The aspartate stretch occupies residues 197 to 200 (QLFK). Arg219 is a binding site for L-aspartate. ATP contacts are provided by residues 219–221 (RDE) and Gln228. His456 serves as a coordination point for L-aspartate. Glu490 serves as a coordination point for ATP. L-aspartate is bound at residue Arg497. ATP is bound at residue 542 to 545 (GWDR). Positions 566–601 (GGGYDPLTQAPAPITAEQRRESGVDAVPDDETAPQA) are disordered. The segment covering 592-601 (VPDDETAPQA) has biased composition (acidic residues).

It belongs to the class-II aminoacyl-tRNA synthetase family. Type 1 subfamily. Homodimer.

Its subcellular location is the cytoplasm. The enzyme catalyses tRNA(Asx) + L-aspartate + ATP = L-aspartyl-tRNA(Asx) + AMP + diphosphate. Its function is as follows. Aspartyl-tRNA synthetase with relaxed tRNA specificity since it is able to aspartylate not only its cognate tRNA(Asp) but also tRNA(Asn). Reaction proceeds in two steps: L-aspartate is first activated by ATP to form Asp-AMP and then transferred to the acceptor end of tRNA(Asp/Asn). This is Aspartate--tRNA(Asp/Asn) ligase from Beutenbergia cavernae (strain ATCC BAA-8 / DSM 12333 / CCUG 43141 / JCM 11478 / NBRC 16432 / NCIMB 13614 / HKI 0122).